Reading from the N-terminus, the 323-residue chain is Oligodendrocyte transcription factor 2 (323 aa).

The segment covering methionine 1–serine 13 has biased composition (polar residues). Positions methionine 1–glutamine 107 are disordered. Positions serine 77 to serine 93 are enriched in low complexity. The 55-residue stretch at glutamine 108–leucine 162 folds into the bHLH domain.

As to quaternary structure, interacts with NKX2-2. Interacts with ZNF488. As to expression, expressed specifically in the brain.

Its subcellular location is the nucleus. The protein resides in the cytoplasm. Functionally, required for oligodendrocyte and motor neuron specification in the spinal cord, as well as for the development of somatic motor neurons in the hindbrain. Functions together with ZNF488 to promote oligodendrocyte differentiation. Cooperates with OLIG1 to establish the pMN domain of the embryonic neural tube. Antagonist of V2 interneuron and of NKX2-2-induced V3 interneuron development. The protein is Oligodendrocyte transcription factor 2 (Olig2) of Mus musculus (Mouse).